The primary structure comprises 421 residues: Monopolin complex subunit mde4 (421 aa).

Disordered regions lie at residues 122-158 and 224-316; these read QKSN…NKDE and DRKL…MTVS. Polar residues predominate over residues 133 to 149; it reads VSQNRLRGSLDTVSSPS. Positions 224–238 are enriched in basic and acidic residues; it reads DRKLRMQKKSTERKS. A compositionally biased stretch (polar residues) spans 262–287; the sequence is RQPNATSGSPLSVTPFLQKTSTSIGL. A compositionally biased stretch (low complexity) spans 288 to 304; that stretch reads SSSPPQSSPSAQSSQPF.

Component of a monopolin-like complex composed of pcs1 and mde4. The complex associates with the kinetochore.

The protein localises to the nucleus. It is found in the chromosome. The protein resides in the centromere. The monopolin-like pcs1/mde4 complex is essential for accurate chromosome segregation during mitosis and meiosis II. May clamp together microtubule binding sites on the same kinetochore, preventing merotelic attachment of microtubules. The protein is Monopolin complex subunit mde4 (mde4) of Schizosaccharomyces pombe (strain 972 / ATCC 24843) (Fission yeast).